Here is a 350-residue protein sequence, read N- to C-terminus: MAPPTVLVTGGAGYIGSHTVLEMLNAGYNVICVDNLCNAYSSGAKLPEALSRVQEITGKKVNFYRVDITDREQVRSVFQEHKIDMVAHFAALKAVGESCRIPLQYYHNNMTGTNVLLEAMADNNVFKFVYSSSATVYGEPKFLPVTEEHPTGNCTSPYGKTKYFTEEILKDLCKSDKRWAVVSLRYFNPVGAHISGRIGEDPNGEPNNLMPYIAQVAVGRRPSLSVYGSDFPTHDGTGVRDYIHIVDLAEGHVKALDKLRNIAETGFFAYNLGTGVGYSVLDMVKAFEKASGKKVNYTLVDRRSGDVATCYADATLADKKLGWKAERGIDKMCEDTWRWQSQNPNGYANK.

NAD(+) contacts are provided by residues 13–15, 34–38, 67–68, F89, and K93; these read GYI, DNLCN, and DI. Position 133–135 (133–135) interacts with substrate; the sequence is SAT. The Proton acceptor role is filled by Y158. NAD(+) contacts are provided by K162 and Y186. Substrate-binding positions include 186-188, 207-209, 225-227, R240, and 303-306; these read YFN, NNL, SVY, and RSGD.

It belongs to the NAD(P)-dependent epimerase/dehydratase family. In terms of assembly, homodimer. Requires NAD(+) as cofactor.

It catalyses the reaction UDP-alpha-D-glucose = UDP-alpha-D-galactose. It carries out the reaction UDP-N-acetyl-alpha-D-glucosamine = UDP-N-acetyl-alpha-D-galactosamine. It functions in the pathway carbohydrate metabolism; galactose metabolism. Its function is as follows. Catalyzes two distinct but analogous reactions: the reversible epimerization of UDP-glucose to UDP-galactose and the reversible epimerization of UDP-N-acetylglucosamine to UDP-N-acetylgalactosamine. The reaction with UDP-Gal plays a critical role in the Leloir pathway of galactose catabolism in which galactose is converted to the glycolytic intermediate glucose 6-phosphate. It contributes to the catabolism of dietary galactose and enables the endogenous biosynthesis of both UDP-Gal and UDP-GalNAc when exogenous sources are limited. Both UDP-sugar interconversions are important in the synthesis of glycoproteins and glycolipids. In Drosophila melanogaster (Fruit fly), this protein is UDP-glucose 4-epimerase (Gale).